A 1224-amino-acid polypeptide reads, in one-letter code: ATP-dependent helicase/deoxyribonuclease subunit B (1224 aa).

The UvrD-like helicase ATP-binding domain maps to 1 to 326; sequence MSLRFILGRA…VCAAANRRSE (326 aa). 8-15 serves as a coordination point for ATP; the sequence is GRAGTGKS. The region spanning 283 to 584 is the UvrD-like helicase C-terminal domain; that stretch reads QSAPRFQHPE…KLSLIPPELD (302 aa). [4Fe-4S] cluster contacts are provided by C841, C1176, C1179, and C1185.

Belongs to the helicase family. AddB/RexB type 1 subfamily. In terms of assembly, heterodimer of AddA and AddB. Mg(2+) serves as cofactor. It depends on [4Fe-4S] cluster as a cofactor.

In terms of biological role, the heterodimer acts as both an ATP-dependent DNA helicase and an ATP-dependent, dual-direction single-stranded exonuclease. Recognizes the chi site generating a DNA molecule suitable for the initiation of homologous recombination. The AddB subunit has 5' -&gt; 3' nuclease activity but not helicase activity. The sequence is that of ATP-dependent helicase/deoxyribonuclease subunit B from Heliobacterium modesticaldum (strain ATCC 51547 / Ice1).